We begin with the raw amino-acid sequence, 29 residues long: uncharacterized protein (29 aa).

It localises to the plastid. The protein resides in the chloroplast. This is an uncharacterized protein from Trieres chinensis (Marine centric diatom).